A 502-amino-acid polypeptide reads, in one-letter code: N-sulphoglucosamine sulphohydrolase (502 aa).

An N-terminal signal peptide occupies residues 1–20; it reads MSCPVPACCALLLVLGLCRA. The Ca(2+) site is built by aspartate 31 and aspartate 32. Asparagine 41 carries an N-linked (GlcNAc...) asparagine glycan. Cysteine 70 is a Ca(2+) binding site. Residue cysteine 70 is the Nucleophile of the active site. Residue cysteine 70 is modified to 3-oxoalanine (Cys). N-linked (GlcNAc...) asparagine glycans are attached at residues asparagine 142 and asparagine 151. A disulfide bridge links cysteine 183 with cysteine 194. Asparagine 264 carries N-linked (GlcNAc...) asparagine glycosylation. Positions 273 and 274 each coordinate Ca(2+). Asparagine 413 carries an N-linked (GlcNAc...) asparagine glycan. The cysteines at positions 481 and 495 are disulfide-linked.

This sequence belongs to the sulfatase family. It depends on Ca(2+) as a cofactor. Post-translationally, the conversion to 3-oxoalanine (also known as C-formylglycine, FGly), of a serine or cysteine residue in prokaryotes and of a cysteine residue in eukaryotes, is critical for catalytic activity.

The protein localises to the lysosome. The catalysed reaction is N-sulfo-D-glucosamine + H2O = D-glucosamine + sulfate. Its function is as follows. Catalyzes a step in lysosomal heparan sulfate degradation. This is N-sulphoglucosamine sulphohydrolase (SGSH) from Homo sapiens (Human).